The primary structure comprises 1761 residues: Probable serine/threonine-protein kinase DDB_G0282963 (1761 aa).

Disordered regions lie at residues 18-47, 60-269, 322-458, 545-717, 749-783, 798-830, 842-956, 972-997, 1081-1151, 1179-1305, 1318-1343, and 1355-1459; these read PQQQQIPQQQEQQQQQQQQQQQQQQQQQQQ, QQQQ…SNKL, SISN…SDFN, QNSS…KSSQ, LKNSPFPPSSPILSPQTDDPNNNNNNNNSNTTISQ, AFYNSGSNNNNNNNNNNNNNNNNNNNNTNSTSA, TTQI…KSVF, NSHHHHNSGNNSSNSNNNNNDDEVPT, ITSA…CNVN, KNNC…PSKQ, ALDSTNNNNNNNNDTDSTSSNMGTPT, and QHSR…ECWK. Low complexity-rich tracts occupy residues 19–47, 60–85, 92–105, and 112–237; these read QQQQIPQQQEQQQQQQQQQQQQQQQQQQQ, QQQQEQQNNNNNINDNINGNNNSNEI, NITNNNGTSIIISL, and ALNS…NNNN. Residues 238 to 256 show a composition bias toward polar residues; it reads KQMTPPTFKNNLQVKHQPQ. Low complexity-rich tracts occupy residues 257–269, 322–341, 348–451, and 546–572; these read SSSGGSIGGSNKL, SISNTTNETTTTTTTTTNTT, GSIG…NNGV, and NSSLNINNNNNSSNNNNINNNNNNNNI. Over residues 573–582 the composition is skewed to polar residues; that stretch reads MAGSTSSVIY. Positions 591 to 627 are enriched in low complexity; that stretch reads NENNNNNINNDNTVCNINNNNNSNNNKSNNSNNSNNS. The span at 633–643 shows a compositional bias: acidic residues; the sequence is SSDEEPETDSD. Composition is skewed to low complexity over residues 674–697, 759–778, 805–824, 847–885, 902–956, 979–990, 1081–1149, and 1180–1262; these read NNTNTNTNTHNTYNNNKNNNNNNT, PILSPQTDDPNNNNNNNNSN, NNNNNNNNNNNNNNNNNNNN, TSDIDTSNSDNNNNNNNNNTSDNNFNDYNNDYNNDYNNY, TKMS…KSVF, SGNNSSNSNNNN, ITSA…CTCN, and NNCT…SNNN. Residues 1263–1273 are compositionally biased toward basic residues; the sequence is NHHHHHHHHHN. 4 stretches are compositionally biased toward low complexity: residues 1288–1303, 1320–1338, 1359–1386, and 1393–1454; these read SSSSSPWSSPALSSPS, DSTNNNNNNNNDTDSTSSN, NNSSNNQNNNNINNNNNNNNNNNNNNNN, and SNST…MNSN. The Protein kinase domain occupies 1476 to 1744; sequence LFLIKKIGAG…AITSLYDDYI (269 aa). Residues 1482 to 1490 and K1503 each bind ATP; that span reads IGAGSFSKV. D1597 functions as the Proton acceptor in the catalytic mechanism.

Belongs to the protein kinase superfamily. TKL Ser/Thr protein kinase family.

The enzyme catalyses L-seryl-[protein] + ATP = O-phospho-L-seryl-[protein] + ADP + H(+). It carries out the reaction L-threonyl-[protein] + ATP = O-phospho-L-threonyl-[protein] + ADP + H(+). This is Probable serine/threonine-protein kinase DDB_G0282963 from Dictyostelium discoideum (Social amoeba).